Here is a 175-residue protein sequence, read N- to C-terminus: NAD(P)H-quinone oxidoreductase subunit J (175 aa).

It belongs to the complex I 30 kDa subunit family. In terms of assembly, NDH-1 can be composed of about 15 different subunits; different subcomplexes with different compositions have been identified which probably have different functions.

The protein localises to the cellular thylakoid membrane. The catalysed reaction is a plastoquinone + NADH + (n+1) H(+)(in) = a plastoquinol + NAD(+) + n H(+)(out). It carries out the reaction a plastoquinone + NADPH + (n+1) H(+)(in) = a plastoquinol + NADP(+) + n H(+)(out). Its function is as follows. NDH-1 shuttles electrons from an unknown electron donor, via FMN and iron-sulfur (Fe-S) centers, to quinones in the respiratory and/or the photosynthetic chain. The immediate electron acceptor for the enzyme in this species is believed to be plastoquinone. Couples the redox reaction to proton translocation, and thus conserves the redox energy in a proton gradient. Cyanobacterial NDH-1 also plays a role in inorganic carbon-concentration. This chain is NAD(P)H-quinone oxidoreductase subunit J, found in Trichormus variabilis (strain ATCC 29413 / PCC 7937) (Anabaena variabilis).